The chain runs to 229 residues: Protein OPG034 (229 aa).

This sequence belongs to the orthopoxvirus OPG034 family.

This chain is Protein OPG034 (OPG034), found in Vaccinia virus (strain Western Reserve) (VACV).